Reading from the N-terminus, the 352-residue chain is Adenosine deaminase (352 aa).

At Ala-2 the chain carries N-acetylalanine. Zn(2+)-binding residues include His-15 and His-17. Substrate-binding residues include His-17 and Asp-19. Position 54 is an N6-acetyllysine (Lys-54). Gly-184 lines the substrate pocket. His-214 is a Zn(2+) binding site. Glu-217 functions as the Proton donor in the catalytic mechanism. An N6-acetyllysine modification is found at Lys-232. Asp-295 provides a ligand contact to Zn(2+). Asp-296 is a binding site for substrate.

Belongs to the metallo-dependent hydrolases superfamily. Adenosine and AMP deaminases family. Interacts with DPP4 (via extracellular domain). Interacts with PLG (via Kringle 4 domain); the interaction stimulates PLG activation when in complex with DPP4. Zn(2+) serves as cofactor. In terms of tissue distribution, detected in brain and liver (at protein level).

The protein localises to the cell membrane. It is found in the cell junction. Its subcellular location is the cytoplasmic vesicle lumen. The protein resides in the cytoplasm. It localises to the lysosome. It carries out the reaction adenosine + H2O + H(+) = inosine + NH4(+). The enzyme catalyses 2'-deoxyadenosine + H2O + H(+) = 2'-deoxyinosine + NH4(+). It catalyses the reaction cordycepin + H2O + H(+) = 3'-deoxyinosine + NH4(+). Its function is as follows. Catalyzes the hydrolytic deamination of adenosine and 2-deoxyadenosine. Plays an important role in purine metabolism and in adenosine homeostasis. Modulates signaling by extracellular adenosine, and so contributes indirectly to cellular signaling events. Acts as a positive regulator of T-cell coactivation, by binding DPP4. Its interaction with DPP4 regulates lymphocyte-epithelial cell adhesion. Enhances dendritic cell immunogenicity by affecting dendritic cell costimulatory molecule expression and cytokines and chemokines secretion. Enhances CD4+ T-cell differentiation and proliferation. Acts as a positive modulator of adenosine receptors ADORA1 and ADORA2A, by enhancing their ligand affinity via conformational change. Stimulates plasminogen activation. Plays a role in male fertility. Plays a protective role in early postimplantation embryonic development. Also responsible for the deamination of cordycepin (3'-deoxyadenosine), a fungal natural product that shows antitumor, antibacterial, antifungal, antivirus, and immune regulation properties. This is Adenosine deaminase (Ada) from Rattus norvegicus (Rat).